The following is a 627-amino-acid chain: MELGGPGAPPPPLLPPLLLLLGAGFLPASSPVETRAHAEERLLKTLFSGYNKWSRPVANISDVVLVHFGLSIAQLIDVDEKNQMMTTNVWVKQEWYDYKLRWDPADYENVTSIRIPSELIWRPDIVLYNNADGDFAITHLTKAHLFHDGRVQWTPPAIYKSSCSIDVTFFPFDQQNCTMKFGSWTYDKAKIDLVSMQSHVDQLGLWESGEWVIVDAAGTYNTRKYECCAEVYPDITYAFVIRRLPLFYTINLIVPCLLISCLTVLVFYLPSDCGEKVTLCISVLLSLTVFLLLITEIIPSTSLVIPLIGEYLLFTMVFVTLSIVITVFVLNVHHRSPRTHTMPAWVRRVFLDVVPRLLLMKRPSVVKDNCRRLIESMHKVASAPGFWPEPEGEPGVVSGERSRGPSRSASFRGPRDEPAEPQPACASPSDRVPAPQPSEGDPGSPCPLPDSCRPPPSTRAPGLTEARSLSFQHVSSAAERVEGGVRCRSWSIQGCAPQDEAASVAGGPVTSSPAFPKASAAELLPPDQPSPCRCRCRKEPSPNAVRKACGTRVPARHLPLSPALARAVEGVQYIADHLKAEDTDFSVKEDWKYVAMVIDRIFLWVFVIVCLLGTAGLFLPPWLAGMI.

The signal sequence occupies residues 1 to 31 (MELGGPGAPPPPLLPPLLLLLGAGFLPASSP). The Extracellular portion of the chain corresponds to 32–244 (VETRAHAEER…ITYAFVIRRL (213 aa)). The N-linked (GlcNAc...) asparagine glycan is linked to asparagine 59. Ca(2+) is bound by residues valine 78 and glutamate 80. Residues asparagine 109 and asparagine 176 are each glycosylated (N-linked (GlcNAc...) asparagine). Cystine bridges form between cysteine 163–cysteine 177 and cysteine 227–cysteine 228. A helical membrane pass occupies residues 245–269 (PLFYTINLIVPCLLISCLTVLVFYL). A lipid anchor (S-palmitoyl cysteine) is attached at cysteine 273. Helical transmembrane passes span 277–295 (VTLCISVLLSLTVFLLLIT) and 311–332 (YLLFTMVFVTLSIVITVFVLNV). The Cytoplasmic segment spans residues 333 to 600 (HHRSPRTHTM…WKYVAMVIDR (268 aa)). Low complexity predominate over residues 384–399 (PGFWPEPEGEPGVVSG). The interval 384–463 (PGFWPEPEGE…PPPSTRAPGL (80 aa)) is disordered. Serine 427 carries the post-translational modification Phosphoserine. Pro residues predominate over residues 444-458 (SPCPLPDSCRPPPST). Residue serine 541 is modified to Phosphoserine. The helical transmembrane segment at 601 to 619 (IFLWVFVIVCLLGTAGLFL) threads the bilayer.

This sequence belongs to the ligand-gated ion channel (TC 1.A.9) family. Acetylcholine receptor (TC 1.A.9.1) subfamily. Alpha-4/CHRNA4 sub-subfamily. In terms of assembly, neuronal AChR is composed of two different types of subunits: alpha and beta. CHRNA4 forms heteropentameric neuronal acetylcholine receptors with CHRNB2 and CHRNB4, as well as CHRNA5 and CHRNB3 as accesory subunits. Found in two major stoichiometric forms, LS (low agonist sensitivity): (CHRNA4)3:(CHRNB2)2 and HS (high agonist sensitivity): (CHRNA4)2:(CHRNB2)3, the two stoichiometric forms differ in their unitary conductance, calcium permeability, ACh sensitivity and potentiation by divalent cation. Cells produce predominantly an (CHRNA4)3:(CHRNB2)2 nAChR. The (CHRNA4)2:(CHRNB2)3 expression is selectively up-regulated by nicotine and has lower single channel conductance and calcium permeability. In the striatum, also forms CHRNA4:CHRNA6:CHRNB2 complexes. Also found in the stoichiometric form: (CHRNA4:CHRNB2)2:CHRNB3. Interacts with RIC3; which is required for proper folding and assembly. Interacts with LYPD6.

It is found in the synaptic cell membrane. The protein resides in the cell membrane. It catalyses the reaction Ca(2+)(in) = Ca(2+)(out). It carries out the reaction K(+)(in) = K(+)(out). The catalysed reaction is Na(+)(in) = Na(+)(out). With respect to regulation, activated by a myriad of ligands such as acetylcholine, cytisine, nicotine, choline and epibatidine. Channel potentiation by calcium is stoichiometry-selective, CHRNA4:CHRNB2 nACh receptor is achieved by calcium association with topographically distinct sites framed by anionic residues within the CHRNA4 subunit and between the CHRNA4 and CHRNB2 subunits. nAChR activity is inhibited by the antagonist alpha-conotoxins BuIA, PnIA, GID and MII, small disulfide-constrained peptides from cone snails. Functionally, component of neuronal acetylcholine receptors (nAChRs) that function as pentameric, ligand-gated cation channels with high calcium permeability among other activities. nAChRs are excitatory neurotrasnmitter receptors formed by a collection of nAChR subunits known to mediate synaptic transmission in the nervous system and the neuromuscular junction. Each nAchR subunit confers differential attributes to channel properties, including activation, deactivation and desensitization kinetics, pH sensitivity, cation permeability, and binding to allosteric modulators. CHRNA4 forms heteropentameric neuronal acetylcholine receptors with CHRNB2 and CHRNB4, as well as CHRNA5 and CHRNB3 as accesory subunits. Is the most abundant nAChR subtype expressed in the central nervous system. Found in two major stoichiometric forms,(CHRNA4)3:(CHRNB2)2 and (CHRNA4)2:(CHRNB2)3, the two stoichiometric forms differ in their unitary conductance, calcium permeability, ACh sensitivity and potentiation by divalent cation. Involved in the modulation of calcium-dependent signaling pathways, influences the release of neurotransmitters, including dopamine, glutamate and GABA. This is Neuronal acetylcholine receptor subunit alpha-4 (CHRNA4) from Mustela putorius furo (European domestic ferret).